The chain runs to 86 residues: MANIKSSKKDSIKSRKKKKLNASKKSMIKTLIKKVKIAILSGDKLKSELAFSKIQPILDRYSAKGLIHKNKAARHKSNLKCKINAL.

The interval 1–23 (MANIKSSKKDSIKSRKKKKLNAS) is disordered.

This sequence belongs to the bacterial ribosomal protein bS20 family.

Its function is as follows. Binds directly to 16S ribosomal RNA. The chain is Small ribosomal subunit protein bS20 from Buchnera aphidicola subsp. Baizongia pistaciae (strain Bp).